The primary structure comprises 380 residues: Glucose-1-phosphate adenylyltransferase (380 aa).

Alpha-D-glucose 1-phosphate is bound by residues G164, E179–K180, and S190.

The protein belongs to the bacterial/plant glucose-1-phosphate adenylyltransferase family. Homotetramer.

The catalysed reaction is alpha-D-glucose 1-phosphate + ATP + H(+) = ADP-alpha-D-glucose + diphosphate. The protein operates within glycan biosynthesis; glycogen biosynthesis. Functionally, involved in the biosynthesis of ADP-glucose, a building block required for the elongation reactions to produce glycogen. Catalyzes the reaction between ATP and alpha-D-glucose 1-phosphate (G1P) to produce pyrophosphate and ADP-Glc. The protein is Glucose-1-phosphate adenylyltransferase of Streptococcus sanguinis (strain SK36).